Here is a 756-residue protein sequence, read N- to C-terminus: Putative beta-xylosidase (756 aa).

The N-terminal stretch at 1-18 (MKKLLFTFLVSTGTIFFS) is a signal peptide. C19 is lipidated: N-palmitoyl cysteine. C19 carries the S-diacylglycerol cysteine lipid modification.

This sequence belongs to the glycosyl hydrolase 3 family.

The protein resides in the cell outer membrane. Glycoside hydrolase probably involved in ulvan degradation. Ulvan is the main polysaccharide component of the Ulvales (green seaweed) cell wall. It is composed of disaccharide building blocks comprising 3-sulfated rhamnose (Rha3S) linked to D-glucuronic acid (GlcA), L-iduronic acid (IduA), or D-xylose (Xyl). The polypeptide is Putative beta-xylosidase (Formosa agariphila (strain DSM 15362 / KCTC 12365 / LMG 23005 / KMM 3901 / M-2Alg 35-1)).